The following is a 235-amino-acid chain: tRNA (guanine-N(1)-)-methyltransferase (235 aa).

S-adenosyl-L-methionine contacts are provided by residues G114 and 134–139 (VGDYIL).

The protein belongs to the RNA methyltransferase TrmD family. As to quaternary structure, homodimer.

It localises to the cytoplasm. The catalysed reaction is guanosine(37) in tRNA + S-adenosyl-L-methionine = N(1)-methylguanosine(37) in tRNA + S-adenosyl-L-homocysteine + H(+). Specifically methylates guanosine-37 in various tRNAs. The sequence is that of tRNA (guanine-N(1)-)-methyltransferase from Chelativorans sp. (strain BNC1).